Consider the following 401-residue polypeptide: Imidazolonepropionase (401 aa).

H70 and H72 together coordinate Fe(3+). Zn(2+) contacts are provided by H70 and H72. 4-imidazolone-5-propanoate is bound by residues R79, Y142, and H175. Residue Y142 participates in N-formimidoyl-L-glutamate binding. H238 serves as a coordination point for Fe(3+). Position 238 (H238) interacts with Zn(2+). Residue Q241 coordinates 4-imidazolone-5-propanoate. D313 is a Fe(3+) binding site. D313 contacts Zn(2+). N-formimidoyl-L-glutamate-binding residues include N315 and G317. T318 provides a ligand contact to 4-imidazolone-5-propanoate.

This sequence belongs to the metallo-dependent hydrolases superfamily. HutI family. Zn(2+) is required as a cofactor. Fe(3+) serves as cofactor.

The protein localises to the cytoplasm. The enzyme catalyses 4-imidazolone-5-propanoate + H2O = N-formimidoyl-L-glutamate. It participates in amino-acid degradation; L-histidine degradation into L-glutamate; N-formimidoyl-L-glutamate from L-histidine: step 3/3. In terms of biological role, catalyzes the hydrolytic cleavage of the carbon-nitrogen bond in imidazolone-5-propanoate to yield N-formimidoyl-L-glutamate. It is the third step in the universal histidine degradation pathway. This is Imidazolonepropionase from Xanthomonas axonopodis pv. citri (strain 306).